Consider the following 366-residue polypeptide: Glutamate 5-kinase (366 aa).

Lys-17 is a binding site for ATP. Residues Ser-57, Asp-144, and Asn-156 each contribute to the substrate site. ATP-binding positions include 176–177 (SD) and 216–222 (TGGMASK). Residues 278 to 352 (QGILHIDEGA…GKSTQELPAE (75 aa)) form the PUA domain.

Belongs to the glutamate 5-kinase family.

The protein resides in the cytoplasm. It carries out the reaction L-glutamate + ATP = L-glutamyl 5-phosphate + ADP. The protein operates within amino-acid biosynthesis; L-proline biosynthesis; L-glutamate 5-semialdehyde from L-glutamate: step 1/2. Functionally, catalyzes the transfer of a phosphate group to glutamate to form L-glutamate 5-phosphate. This Rhodococcus jostii (strain RHA1) protein is Glutamate 5-kinase.